The chain runs to 538 residues: Syncytin-2 (538 aa).

An N-terminal signal peptide occupies residues 1 to 15; it reads MGLLLLVLILTPSLA. The Extracellular portion of the chain corresponds to 16–478; that stretch reads AYRHPDFPLL…GWLNWEGTWK (463 aa). A CXXC motif is present at residues 43-46; it reads CWLC. 3 disulfide bridges follow: C43/C46, C43/C439, and C431/C438. Residues N133, N146, N177, N220, N241, N247, N312, and N332 are each glycosylated (N-linked (GlcNAc...) asparagine). The tract at residues 354-374 is fusion peptide; that stretch reads FIPLLAGLGILAGTGTGIAGI. Residues 414–430 carry the CKS-17 motif; that stretch reads LQNRRGLDMLTAAQGGI. The CX6CC motif lies at 431–439; the sequence is CLALDEKCC. N443 carries N-linked (GlcNAc...) asparagine glycosylation. A helical membrane pass occupies residues 479–499; sequence WFSWVLPLTGPLVSLLLLLLF. The Cytoplasmic segment spans residues 500–538; the sequence is GPCLLNLITQFVSSRLQAIKLQTNLSAGRHPRNIQESPF.

This sequence belongs to the gamma type-C retroviral envelope protein family. HERV class-I FRD env subfamily. In terms of assembly, the surface and transmembrane proteins form a heterodimer. They are attached by non-covalent interactions or by a labile interchain disulfide bond. Interacts with MFSD2A. Post-translationally, specific enzymatic cleavages in vivo yield the mature SU and TM proteins. In terms of processing, the CXXC motif is highly conserved across a broad range of retroviral envelope proteins. It is thought to participate in the formation of a labile disulfide bond possibly with the CX6CC motif present in the transmembrane protein. Isomerization of the intersubunit disulfide bond to an SU intrachain disulfide bond is thought to occur upon receptor recognition in order to allow membrane fusion. In terms of tissue distribution, expressed at higher level in placenta. Expressed at lower level in adrenal, bone marrow, brain, breast, colon, kidney, lung, ovary, peripheral blood lymphocytes, prostate, skin, spleen, testis, thymus, thyroid, trachea.

It localises to the virion. Its subcellular location is the cell membrane. Its function is as follows. This endogenous retroviral envelope protein has retained its original fusogenic properties and participates in trophoblast fusion and the formation of a syncytium during placenta morphogenesis. The interaction with MFSD2A is apparently important for this process. In terms of biological role, endogenous envelope proteins may have kept, lost or modified their original function during evolution but this one can still make pseudotypes with MLV, HIV-1 or SIV-1 virions and confer infectivity. Retroviral envelope proteins mediate receptor recognition and membrane fusion during early infection. The surface protein mediates receptor recognition, while the transmembrane protein anchors the envelope heterodimer to the viral membrane through one transmembrane domain. The other hydrophobic domain, called fusion peptide, mediates fusion of the viral membrane with the target cell membrane. In Homo sapiens (Human), this protein is Syncytin-2 (ERVFRD-1).